Consider the following 175-residue polypeptide: Regenerating islet-derived protein 3-gamma (175 aa).

The signal sequence occupies residues 1–26; that stretch reads MLPPMALPSVSWMLLSCLILLCQVQG. Positions 27-37 are excised as a propeptide; sequence EETQKELPSPR. Disulfide bonds link cysteine 40–cysteine 51, cysteine 68–cysteine 171, and cysteine 146–cysteine 163. The region spanning 47-172 is the C-type lectin domain; it reads YGSPCYALFL…CDAKLPYVCK (126 aa). The sufficient to activate EXTL3 stretch occupies residues 103 to 118; it reads WIGLHDPTQGSEPDGD. A Zn(2+)-binding site is contributed by histidine 107. Residues 114-116 carry the EPN motif; that stretch reads EPD. Glutamate 121 and histidine 145 together coordinate Zn(2+).

In terms of assembly, forms a hexameric membrane-permeabilizing oligomeric pore on membrane phospholipids. The hexamer is formed by three dimers related by helical symmetry. Forms filaments, filamentation traps pore complexes and limits damage to host cells. Interacts with EXTL3. In terms of processing, proteolytic processing by trypsin removes an inhibitory N-terminal propeptide and is essential for peptidoglycan binding and antibacterial activity. As to expression, predominantly expressed in pancreas, where it may be restricted to exocrine pancreas. Moderate expression levels in testis and weak in heart, kidney and placenta.

It localises to the secreted. Its subcellular location is the cytoplasm. With respect to regulation, lipopolysaccharide inhibits pore-forming activity, explaining why is bactericidal for Gram-positive but not Gram-negative bacteria. Its function is as follows. Bactericidal C-type lectin which acts exclusively against Gram-positive bacteria and mediates bacterial killing by binding to surface-exposed carbohydrate moieties of peptidoglycan. Restricts bacterial colonization of the intestinal epithelial surface and consequently limits activation of adaptive immune responses by the microbiota. Functionally, acts as a hormone in response to different stimuli like anti-inflammatory signals, such as IL17A, or gut microbiome. Is secreted by different cell types to activate its receptor EXTL3 and induce cell specific signaling pathways. Induced by IL17A in keratinocytes, regulates keratinocyte proliferation and differentiation after skin injury. In parallel, inhibits skin inflammation through the inhibition of inflammatory cytokines such as IL6 and TNF. Induced by IL22 in lung epithelial cells, inhibits cytokine production and regulates allergic airway inflammation. Induced in small intestine by inulin-enriched diet and Lactobacillus gasseri enriched microbiome, plays a role in the improvement of gut barrier function, the regulation of energy balance and glucose levels. Modulates microbiota composition in duodenal contents. Produced by nociceptor in response to endotoxins, prevents endotoxic death by targeting kynurenine pathway in microglia. Has bacteriostatic activity. In terms of biological role, has bactericidal activity against L.monocytogenes and methicillin-resistant S.aureus. This is Regenerating islet-derived protein 3-gamma from Homo sapiens (Human).